Reading from the N-terminus, the 560-residue chain is MKYGKVSFLALLCSLYVRGSLADPESEQEPLVFNPTEVKAPLVEQFQGAWSERWIPSHAKRFVNGIEEMSYVGEWTVEESSGPGALKGEAGLVMKDEAAHHAISYEFDEPINEPEKDLVVQYEVNPEEGLNCGGAYLKLLAEPTHGEMSNSIDYRIMFGPDKCGVNDRVHFIFKHKNPLTGEYSEKHLDSRPASLLKPGITNLYTLIVKPDQTFEVRINGDVVRQGSLFYDFIPPVLPPVEIYDPEDIKPADWVDEPEIPDPNAVKPDDWDEDAPRMIPDPDAVKPEDWLEDEPLYIPDPEAQKPEDWDDEEDGDWIPSEIINPKCIEGAGCGEWKPPMIRNPNYRGPWSPPMIPNPEFIGEWYPRKIPNPDYFDDDHPSHFGPLYGVGFELWTMQPNIRFSNIYVGHSIEDAERLGNETFLPKLKAERELLSKQESMEKQSMHVDEESNQILEKFLDVYDIIKAKLPPNVAEKVDYYVETIIETPEIGIAIVAVLGSLTAVILTCYFYFFASSSPASLSTGTTEAEKEQQEKFKQETETEKIDVSYAPETESPTAKNED.

A signal peptide spans methionine 1–alanine 22. Topologically, residues aspartate 23–glycine 489 are lumenal. Cysteine 132 and cysteine 163 form a disulfide bridge. Positions 136, 138, 154, and 161 each coordinate an alpha-D-glucoside. A p domain (Extended arm) region spans residues isoleucine 242–aspartate 375. A run of 5 repeats spans residues aspartate 244–aspartate 255, aspartate 261–glutamate 272, aspartate 280–glutamate 291, aspartate 299–aspartate 310, and glycine 314–proline 324. 2 4 X approximate repeats regions span residues aspartate 244–aspartate 310 and glycine 314–proline 371. The interval tryptophan 253–aspartate 273 is disordered. Cysteine 326 and cysteine 332 are oxidised to a cystine. Tandem repeats lie at residues glycine 333–proline 343, glycine 347–proline 357, and glycine 361–proline 371. Residue glutamate 391 coordinates an alpha-D-glucoside. N-linked (GlcNAc...) asparagine glycosylation occurs at asparagine 418. The helical transmembrane segment at isoleucine 490–alanine 512 threads the bilayer. Residues serine 513 to aspartate 560 are Cytoplasmic-facing. A disordered region spans residues alanine 517–aspartate 560. Residues glutamate 525–aspartate 544 are compositionally biased toward basic and acidic residues. Threonine 551 is modified (phosphothreonine). Serine 553 is subject to Phosphoserine. The residue at position 555 (threonine 555) is a Phosphothreonine.

This sequence belongs to the calreticulin family.

The protein localises to the endoplasmic reticulum membrane. Its function is as follows. Calcium-binding protein that interacts with newly synthesized monoglucosylated glycoproteins in the endoplasmic reticulum. It may act in assisting protein assembly and/or in the retention within the ER of unassembled protein subunits. It seems to play a major role in the quality control apparatus of the ER by the retention of incorrectly folded proteins. In Schizosaccharomyces pombe (strain 972 / ATCC 24843) (Fission yeast), this protein is Calnexin homolog (cal1).